A 422-amino-acid polypeptide reads, in one-letter code: Serine--tRNA ligase (422 aa).

229 to 231 (TAE) provides a ligand contact to L-serine. Residues 260–262 (RRE) and Val-276 each bind ATP. Residue Glu-283 participates in L-serine binding. ATP is bound at residue 349–352 (EVTS). Position 384 (Thr-384) interacts with L-serine.

Belongs to the class-II aminoacyl-tRNA synthetase family. Type-1 seryl-tRNA synthetase subfamily. As to quaternary structure, homodimer. The tRNA molecule binds across the dimer.

It is found in the cytoplasm. It catalyses the reaction tRNA(Ser) + L-serine + ATP = L-seryl-tRNA(Ser) + AMP + diphosphate + H(+). The enzyme catalyses tRNA(Sec) + L-serine + ATP = L-seryl-tRNA(Sec) + AMP + diphosphate + H(+). Its pathway is aminoacyl-tRNA biosynthesis; selenocysteinyl-tRNA(Sec) biosynthesis; L-seryl-tRNA(Sec) from L-serine and tRNA(Sec): step 1/1. Its function is as follows. Catalyzes the attachment of serine to tRNA(Ser). Is also able to aminoacylate tRNA(Sec) with serine, to form the misacylated tRNA L-seryl-tRNA(Sec), which will be further converted into selenocysteinyl-tRNA(Sec). This chain is Serine--tRNA ligase, found in Treponema denticola (strain ATCC 35405 / DSM 14222 / CIP 103919 / JCM 8153 / KCTC 15104).